An 801-amino-acid polypeptide reads, in one-letter code: Phosphorus acquisition-controlling protein (801 aa).

4 disordered regions span residues 292–317 (GSSP…DLAR), 366–607 (APSQ…SAGA), 628–725 (NTVP…ASTV), and 756–801 (MKMQ…AMDE). A compositionally biased stretch (low complexity) spans 374 to 386 (PLTPLIPTSSSST). 2 stretches are compositionally biased toward polar residues: residues 387-401 (AGVT…SPEN) and 459-472 (KLSS…SVVG). The interaction with negative regulatory factor stretch occupies residues 446 to 540 (PGIASPATPA…PPSPAVAKPL (95 aa)). Residues 477 to 486 (DPMDPDHIEN) show a composition bias toward basic and acidic residues. Over residues 535 to 554 (AVAKPLALPSAALSSPQLKP) the composition is skewed to low complexity. The segment covering 637 to 646 (SELSTNLTSK) has biased composition (polar residues). The bHLH domain occupies 645–735 (SKRTSHKIAE…EMAIEYIKQL (91 aa)). The span at 676–687 (PAKEGGDGDGDG) shows a compositional bias: basic and acidic residues. Residues 690–699 (SSGGGGGSGG) are compositionally biased toward gly residues. The segment covering 700-713 (ADREDKREKDKDKA) has biased composition (basic and acidic residues). Residues 765-777 (GSGSSVGDAGDLG) are compositionally biased toward low complexity.

As to quaternary structure, binds DNA as a dimer.

Its subcellular location is the nucleus. Functionally, factor that activates the transcription of structural genes for phosphorus acquisition. This Neurospora crassa (strain ATCC 24698 / 74-OR23-1A / CBS 708.71 / DSM 1257 / FGSC 987) protein is Phosphorus acquisition-controlling protein (nuc-1).